The primary structure comprises 275 residues: UBX domain-containing protein 8 (275 aa).

Residue Met-1 is a topological domain, cytoplasmic. Residues 2–22 (ASRGVVGIFLLSALPLLCLEL) traverse the membrane as a helical segment. At 23–33 (RRGKPDLGIKD) the chain is on the lumenal side. Residues 34–54 (LILLCGRIFLLLALLTLIISV) form a helical membrane-spanning segment. At 55–275 (TTSWVNSFKP…LNVEEKEQSS (221 aa)) the chain is on the cytoplasmic side. The segment at 137-181 (DEDLELDSESQTSFETSNREAAKRRNLPNSVTNISPPAEQPTKKE) is disordered. A UBX domain is found at 192 to 268 (TAEEVVTVAL…GITVDTVLNV (77 aa)).

As to quaternary structure, interacts with SYVN1 and VCP.

It localises to the endoplasmic reticulum membrane. In terms of biological role, involved in endoplasmic reticulum-associated degradation (ERAD) for misfolded lumenal proteins, possibly by tethering VCP to the endoplasmic reticulum membrane. May play a role in reproduction. May play a role in reproduction. The sequence is that of UBX domain-containing protein 8 (UBXN8) from Bos taurus (Bovine).